We begin with the raw amino-acid sequence, 164 residues long: Protein-export protein SecB (164 aa).

The protein belongs to the SecB family. As to quaternary structure, homotetramer, a dimer of dimers. One homotetramer interacts with 1 SecA dimer.

Its subcellular location is the cytoplasm. Its function is as follows. One of the proteins required for the normal export of preproteins out of the cell cytoplasm. It is a molecular chaperone that binds to a subset of precursor proteins, maintaining them in a translocation-competent state. It also specifically binds to its receptor SecA. This chain is Protein-export protein SecB, found in Zymomonas mobilis subsp. mobilis (strain ATCC 31821 / ZM4 / CP4).